The following is a 183-amino-acid chain: Putative manganese efflux pump MntP 1 (183 aa).

Transmembrane regions (helical) follow at residues 6–26, 36–56, 64–84, 100–120, 130–150, and 158–178; these read LFLL…CIGI, MIFV…GGYI, IVPI…ILMI, IMYL…GFTT, LFMS…LGII, and ISII…LFGL.

Belongs to the MntP (TC 9.B.29) family.

It is found in the cell membrane. Probably functions as a manganese efflux pump. In Clostridium botulinum (strain Hall / ATCC 3502 / NCTC 13319 / Type A), this protein is Putative manganese efflux pump MntP 1.